A 216-amino-acid polypeptide reads, in one-letter code: Sporozoite antigen (216 aa).

Residues 194-216 (QQQQPSSYGAPPASSQQPSGFFW) form a disordered region.

The polypeptide is Sporozoite antigen (Eimeria tenella (Coccidian parasite)).